A 1257-amino-acid polypeptide reads, in one-letter code: Insulin receptor substrate 4 (1257 aa).

A PH domain is found at 78 to 199 (EVCKRGYLRK…WYLLLSRLIL (122 aa)). The region spanning 231 to 335 (YKDVWQVIVK…EKMRALCADE (105 aa)) is the IRS-type PTB domain. Disordered regions lie at residues 406-653 (VAHS…GGRF), 678-921 (IPEG…SSDY), and 1179-1257 (QDVA…KRGR). Residues 408–424 (HSRRGRLHLPRGRRSRR) are compositionally biased toward basic residues. The YXXM motif 1 signature appears at 487 to 490 (YMPM). A compositionally biased stretch (gly residues) spans 495-509 (SGNGRGSGGGQGSNG). Residues 510–524 (QGSSSHSSGGNQCSG) show a composition bias toward low complexity. Composition is skewed to gly residues over residues 525 to 542 (EGQG…GSGG) and 551 to 599 (GTAG…SGKG). The span at 627-640 (MPPPPPPPPPPPPA) shows a compositional bias: pro residues. Residues 641 to 650 (GGTGGKGKSG) show a composition bias toward gly residues. Residues 678–800 (IPEGAARGPH…KNPRNPQGGS (123 aa)) are CRK-binding. Short sequence motifs (YXXM motif) lie at residues 700–703 (YVPM), 717–720 (YMPM), and 743–746 (YMMM). Over residues 750–761 (VSPPPAPSPPKA) the composition is skewed to pro residues. The span at 763–774 (DTNKEDDSKDND) shows a compositional bias: basic and acidic residues. The YXXM motif 5 motif lies at 779–782 (YMFM). Over residues 800–810 (SSSKSWSSYFS) the composition is skewed to low complexity. A compositionally biased stretch (polar residues) spans 815–826 (FRSSPLGQNDNS). The YXXM motif 6 motif lies at 828 to 831 (YVPM). Positions 840 to 855 (GLDKEVSYNWDPKDAA) are enriched in basic and acidic residues. The GRB2-binding stretch occupies residues 895-897 (ITK). Tyrosine 921 is subject to Phosphotyrosine. Positions 921–924 (YVNM) match the YXXM motif 7 motif. A compositionally biased stretch (basic and acidic residues) spans 1236–1257 (DTHVRMDFARRDNQFDSPKRGR).

In terms of assembly, interacts with SOCS6 in response to stimulation with either insulin or IGF1. Interacts with CRK and CRKL. Interaction with CRK is stronger than with CRKL. Interacts with CRK via the phosphorylated YXXM motifs. Interacts with GRB2 and PIK3R1. Interacts with PLC-gamma, SHC1, PTK6, PPP4C and NISCH. Interacts with ASB4; this interaction promotes IRS4 proteasomal degradation. Phosphorylated on tyrosine residues in response to both insulin and IGF1 signaling. Phosphorylated on Tyr-921 in response to FGF2 signaling. Phosphorylation of Tyr-921 is required for GRB2, phospholipase C-gamma and phosphatidylinositol 3-kinase interaction. Post-translationally, ubiquitinated in a ASB4-dependent manner, leading to proteasomal degradation. Expressed in myoblasts. Expressed in liver and hepatocellular carcinoma.

The protein resides in the cell membrane. In terms of biological role, acts as an interface between multiple growth factor receptors possessing tyrosine kinase activity, such as insulin receptor, IGF1R and FGFR1, and a complex network of intracellular signaling molecules containing SH2 domains. Involved in the IGF1R mitogenic signaling pathway. Promotes the AKT1 signaling pathway and BAD phosphorylation during insulin stimulation without activation of RPS6KB1 or the inhibition of apoptosis. Interaction with GRB2 enhances insulin-stimulated mitogen-activated protein kinase activity. May be involved in nonreceptor tyrosine kinase signaling in myoblasts. Plays a pivotal role in the proliferation/differentiation of hepatoblastoma cell through EPHB2 activation upon IGF1 stimulation. May play a role in the signal transduction in response to insulin and to a lesser extent in response to IL4 and GH on mitogenesis. Plays a role in growth, reproduction and glucose homeostasis. May act as negative regulators of the IGF1 signaling pathway by suppressing the function of IRS1 and IRS2. The polypeptide is Insulin receptor substrate 4 (IRS4) (Homo sapiens (Human)).